The sequence spans 944 residues: MGRRLKFLQKLAFLGQNHRYKALERDEVETLIDEQCELKAIEREKTVAALPPGEACKCSREELARAFHVDLDSGLSEFAVAQRRLVHGWNEFVTDNAEPVWKKYLDQFRNPLILLLLGSSVVSVLTKEYEDAVSIALAVLIVVTVGFIQEYRSEKSLEELTKLVPPECNCLRDGKLRHMLARDLVPGDIVSLSMGDRIPADIRLTEVTDLLVDESSFTGEVEPCGKTDSPLADGGDLSTLSNVVFMGTLVQCGKGQGVVIGTGEQSQFGEVFKMMRAEETPKTPLQKSMDKLGKQLTIFSFGIIGLLMLVGWVQGKPFLSMFTVGVSLAVAAIPEGLPIVVMVTLVLGVLRMAKKRVIVKKLPIVETLGCCNVICSDKTGTLTANEMTATQLVTSDGFHAEVSGVGYSGEGTVCLLPSKEVIKGFDNVSVGKLVEAGCVANNAVIRKNAVMGQPTEGALVVLAMKMNLGSIKDSYVRKKEIPFSSEQKWMAVRCGPKSEDGEDIYFMKGAFEEVIHHCSMYNNGGIPLPLTPQQKSYCQQEEKKMGSLGLRVLALASGPELGRLTFLGLVGIIDPPRAGVKEAVQVLSESGVSVKMVTGDALETALAIGRTIGLCNEKLKAMSGEEVEGTEQGALAARVRQVSVFFRTSPKHKVKIIKALQESGAIVAMTGDGVNDSVALKSADIGIAMGQTGTDVSKEAANMILVDDDFSAIMSAVEEGKGIFYNIKNFVRFQLSTSIAALSLITLSTVCNLPSPLNAMQILWVNIIMDGPPAQSLGVEPVDRDALRRPPRSVGDTILNRALILRVLMSAAVIIGGTLFIFWREIPANGTSTPRTTTMAFTCFVFFDLFNALSCRSQTKLIFEIGFFRNRMFLYSVLGSLLGQLAVIYAPPLQKVFQTENLSALDLLLLTGLASSVFILSELLKLWEKFLSRARPTQMLPEAV.

The Cytoplasmic portion of the chain corresponds to 1–104; the sequence is MGRRLKFLQK…DNAEPVWKKY (104 aa). Positions 69–93 are interaction with ORAI1; that stretch reads VDLDSGLSEFAVAQRRLVHGWNEFV. Residues 105-125 form a helical membrane-spanning segment; the sequence is LDQFRNPLILLLLGSSVVSVL. At 126–127 the chain is on the extracellular side; the sequence is TK. Residues 128 to 148 form a helical membrane-spanning segment; it reads EYEDAVSIALAVLIVVTVGFI. Topologically, residues 149-229 are cytoplasmic; sequence QEYRSEKSLE…EVEPCGKTDS (81 aa). The chain crosses the membrane as a helical span at residues 230–250; sequence PLADGGDLSTLSNVVFMGTLV. Residues 251–291 are Extracellular-facing; that stretch reads QCGKGQGVVIGTGEQSQFGEVFKMMRAEETPKTPLQKSMDK. Position 262 is a phosphothreonine (Thr-262). Ser-266 is modified (phosphoserine). Residues 292-312 traverse the membrane as a helical segment; sequence LGKQLTIFSFGIIGLLMLVGW. Residues 313 to 329 lie on the Cytoplasmic side of the membrane; the sequence is VQGKPFLSMFTVGVSLA. Ca(2+)-binding residues include Val-330, Ala-331, Ile-333, and Glu-335. A helical transmembrane segment spans residues 330–350; sequence VAAIPEGLPIVVMVTLVLGVL. At 351–748 the chain is on the extracellular side; the sequence is RMAKKRVIVK…IAALSLITLS (398 aa). Asp-377 (4-aspartylphosphate intermediate) is an active-site residue. The Mg(2+) site is built by Asp-672 and Asp-676. A helical transmembrane segment spans residues 749 to 769; the sequence is TVCNLPSPLNAMQILWVNIIM. Ca(2+)-binding residues include Asn-766 and Asp-770. Residues 770-802 are Cytoplasmic-facing; sequence DGPPAQSLGVEPVDRDALRRPPRSVGDTILNRA. Residues 803 to 823 traverse the membrane as a helical segment; it reads LILRVLMSAAVIIGGTLFIFW. The Extracellular segment spans residues 824–835; that stretch reads REIPANGTSTPR. The chain crosses the membrane as a helical span at residues 836 to 853; that stretch reads TTTMAFTCFVFFDLFNAL. Over 854 to 872 the chain is Cytoplasmic; sequence SCRSQTKLIFEIGFFRNRM. A helical membrane pass occupies residues 873–893; sequence FLYSVLGSLLGQLAVIYAPPL. Residues 894–903 lie on the Extracellular side of the membrane; the sequence is QKVFQTENLS. A helical membrane pass occupies residues 904-924; the sequence is ALDLLLLTGLASSVFILSELL. Topologically, residues 925–944 are cytoplasmic; sequence KLWEKFLSRARPTQMLPEAV.

This sequence belongs to the cation transport ATPase (P-type) (TC 3.A.3) family. Type IIA subfamily. In terms of assembly, interacts (via N-terminus) with ORAI1 (via N- and C-termini); this interaction regulates Ca(2+) influx at the plasma membrane. Expressed in hippocampal neurons (at protein level). Expressed in lactating mammary epithelium (at protein level).

Its subcellular location is the golgi apparatus. It is found in the trans-Golgi network membrane. The protein resides in the cell membrane. It localises to the basolateral cell membrane. The catalysed reaction is Ca(2+)(in) + ATP + H2O = Ca(2+)(out) + ADP + phosphate + H(+). It carries out the reaction Mn(2+)(in) + ATP + H2O = Mn(2+)(out) + ADP + phosphate + H(+). ATP-driven pump that supplies the Golgi apparatus with Ca(2+) and Mn(2+) ions, both essential cofactors for processing and trafficking of newly synthesized proteins in the secretory pathway. Within a catalytic cycle, acquires Ca(2+) or Mn(2+) ions on the cytoplasmic side of the membrane and delivers them to the lumenal side. The transfer of ions across the membrane is coupled to ATP hydrolysis and is associated with a transient phosphorylation that shifts the pump conformation from inward-facing to outward-facing state. Induces Ca(2+) influx independently of its ATP-driven pump function. At the basolateral membrane of mammary epithelial cells, interacts with Ca(2+) channel ORAI1 and mediates Ca(2+) entry independently of the Ca(2+) content of endoplasmic reticulum or Golgi stores. May facilitate transepithelial transport of large quantities of Ca(2+) for milk secretion via activation of Ca(2+) influx channels at the plasma membrane and active Ca(2+) transport at the Golgi apparatus. In Mus musculus (Mouse), this protein is Calcium-transporting ATPase type 2C member 2.